A 397-amino-acid chain; its full sequence is Metallophosphoesterase 1 (397 aa).

Residues 27-47 (IAVVFAVLLFCEFLIYYLAIF) traverse the membrane as a helical segment. Positions 77, 119, 157, 250, 304, and 306 each coordinate a divalent metal cation. Residues 357–377 (VVLIIYCGMVGFLVVLTLTHF) form a helical membrane-spanning segment. Residues 393-397 (KRKTR) carry the Di-lysine motif motif.

Belongs to the metallophosphoesterase superfamily. MPPE1 family. In terms of assembly, interacts with GPI-anchor proteins (via the GPI portion). Interacts with TMED10. Mn(2+) is required as a cofactor.

The protein localises to the endoplasmic reticulum-Golgi intermediate compartment membrane. Its function is as follows. Metallophosphoesterase that catalyzes the removal of a side-chain ethanolamine-phosphate (EtNP) from the second mannose of the GPI-anchor protein intermediate. Participates in the glycan remodeling steps of GPI-anchor maturation to allow an efficient transport of GPI-anchor proteins from the endoplasmic reticulum to the Golgi. The protein is Metallophosphoesterase 1 of Pongo abelii (Sumatran orangutan).